A 609-amino-acid chain; its full sequence is Phosphoenolpyruvate carboxykinase [GTP] (609 aa).

Substrate-binding positions include Arg81 and 220 to 222; that span reads YGG. Positions 229 and 249 each coordinate Mn(2+). Substrate is bound at residue Ser271. Residue 272-277 coordinates GTP; sequence ACGKTN. Residue Cys273 is part of the active site. Asp296 contacts Mn(2+). Substrate is bound at residue 387 to 389; sequence NSR. GTP contacts are provided by residues Arg389, Arg420, and 515–518; that span reads FGEN.

Belongs to the phosphoenolpyruvate carboxykinase [GTP] family. As to quaternary structure, monomer. The cofactor is Mn(2+).

It is found in the cytoplasm. The catalysed reaction is oxaloacetate + GTP = phosphoenolpyruvate + GDP + CO2. The protein operates within carbohydrate biosynthesis; gluconeogenesis. In terms of biological role, catalyzes the conversion of oxaloacetate (OAA) to phosphoenolpyruvate (PEP), the rate-limiting step in the metabolic pathway that produces glucose from lactate and other precursors derived from the citric acid cycle. The chain is Phosphoenolpyruvate carboxykinase [GTP] from Mycobacterium leprae (strain Br4923).